The chain runs to 542 residues: Plasminogen-binding protein PgbB (542 aa).

The tract at residues Lys-399 to Lys-542 is disordered. Basic and acidic residues-rich tracts occupy residues Gln-418–Val-435 and Val-447–Arg-456. Positions Asp-457 to Thr-467 are enriched in polar residues. Residues Asn-481 to Lys-542 show a composition bias toward basic and acidic residues.

It is found in the cell surface. Binds plasminogen, specifically, and in a concentration and lysine-dependent manner. Plasminogen is the precursor of plasmin, a serine protease that cleaves fibrin, fibronectin, laminin and vitronectin. Acquisition of plasminogen/plasmin could enable H.pylori to degrade host components. This chain is Plasminogen-binding protein PgbB (pgbB), found in Helicobacter pylori (strain ATCC 700392 / 26695) (Campylobacter pylori).